We begin with the raw amino-acid sequence, 412 residues long: Multifunctional CCA protein (412 aa).

The ATP site is built by glycine 8 and arginine 11. CTP is bound by residues glycine 8 and arginine 11. The Mg(2+) site is built by aspartate 21 and aspartate 23. ATP is bound by residues arginine 91, arginine 137, and arginine 140. CTP contacts are provided by arginine 91, arginine 137, and arginine 140. The HD domain maps to 226-327 (TGEHVLMVVE…VKVLERCDAL (102 aa)).

Belongs to the tRNA nucleotidyltransferase/poly(A) polymerase family. Bacterial CCA-adding enzyme type 1 subfamily. In terms of assembly, monomer. Can also form homodimers and oligomers. Mg(2+) is required as a cofactor. The cofactor is Ni(2+).

The catalysed reaction is a tRNA precursor + 2 CTP + ATP = a tRNA with a 3' CCA end + 3 diphosphate. The enzyme catalyses a tRNA with a 3' CCA end + 2 CTP + ATP = a tRNA with a 3' CCACCA end + 3 diphosphate. Catalyzes the addition and repair of the essential 3'-terminal CCA sequence in tRNAs without using a nucleic acid template. Adds these three nucleotides in the order of C, C, and A to the tRNA nucleotide-73, using CTP and ATP as substrates and producing inorganic pyrophosphate. tRNA 3'-terminal CCA addition is required both for tRNA processing and repair. Also involved in tRNA surveillance by mediating tandem CCA addition to generate a CCACCA at the 3' terminus of unstable tRNAs. While stable tRNAs receive only 3'-terminal CCA, unstable tRNAs are marked with CCACCA and rapidly degraded. The polypeptide is Multifunctional CCA protein (Azoarcus sp. (strain BH72)).